A 139-amino-acid chain; its full sequence is Large ribosomal subunit protein uL16 (139 aa).

The span at 1–21 shows a compositional bias: basic residues; sequence MLSPRKTKFRKQHRGRMRGKA. A disordered region spans residues 1–23; that stretch reads MLSPRKTKFRKQHRGRMRGKATR.

The protein belongs to the universal ribosomal protein uL16 family. Part of the 50S ribosomal subunit.

In terms of biological role, binds 23S rRNA and is also seen to make contacts with the A and possibly P site tRNAs. The sequence is that of Large ribosomal subunit protein uL16 from Acaryochloris marina (strain MBIC 11017).